The primary structure comprises 99 residues: 10 kDa heat shock protein, mitochondrial (99 aa).

It belongs to the GroES chaperonin family. In terms of assembly, homoheptamer arranged in a ring structure. 2 heptameric Hsp10 rings interact with a Hsp60 tetradecamer in the structure of a back-to-back double heptameric ring to form the symmetrical football complex.

It is found in the mitochondrion matrix. Co-chaperonin implicated in mitochondrial protein import and macromolecular assembly. Together with Hsp60, facilitates the correct folding of imported proteins. May also prevent misfolding and promote the refolding and proper assembly of unfolded polypeptides generated under stress conditions in the mitochondrial matrix. The functional units of these chaperonins consist of heptameric rings of the large subunit Hsp60, which function as a back-to-back double ring. In a cyclic reaction, Hsp60 ring complexes bind one unfolded substrate protein per ring, followed by the binding of ATP and association with 2 heptameric rings of the co-chaperonin Hsp10. This leads to sequestration of the substrate protein in the inner cavity of Hsp60 where, for a certain period of time, it can fold undisturbed by other cell components. Synchronous hydrolysis of ATP in all Hsp60 subunits results in the dissociation of the chaperonin rings and the release of ADP and the folded substrate protein. This Oryzias latipes (Japanese rice fish) protein is 10 kDa heat shock protein, mitochondrial (hspe1).